A 496-amino-acid chain; its full sequence is Aspartyl/glutamyl-tRNA(Asn/Gln) amidotransferase subunit B (496 aa).

Belongs to the GatB/GatE family. GatB subfamily. As to quaternary structure, heterotrimer of A, B and C subunits.

It carries out the reaction L-glutamyl-tRNA(Gln) + L-glutamine + ATP + H2O = L-glutaminyl-tRNA(Gln) + L-glutamate + ADP + phosphate + H(+). The enzyme catalyses L-aspartyl-tRNA(Asn) + L-glutamine + ATP + H2O = L-asparaginyl-tRNA(Asn) + L-glutamate + ADP + phosphate + 2 H(+). Allows the formation of correctly charged Asn-tRNA(Asn) or Gln-tRNA(Gln) through the transamidation of misacylated Asp-tRNA(Asn) or Glu-tRNA(Gln) in organisms which lack either or both of asparaginyl-tRNA or glutaminyl-tRNA synthetases. The reaction takes place in the presence of glutamine and ATP through an activated phospho-Asp-tRNA(Asn) or phospho-Glu-tRNA(Gln). The chain is Aspartyl/glutamyl-tRNA(Asn/Gln) amidotransferase subunit B from Xanthobacter autotrophicus (strain ATCC BAA-1158 / Py2).